Consider the following 47-residue polypeptide: Defensin-like protein 1 (47 aa).

4 cysteine pairs are disulfide-bonded: C3–C47, C14–C36, C20–C41, and C24–C43.

This sequence belongs to the DEFL family. Protease inhibitor I18 (RTI/MTI-2) subfamily.

The polypeptide is Defensin-like protein 1 (Sorghum bicolor (Sorghum)).